Here is a 1265-residue protein sequence, read N- to C-terminus: Methionine synthase (1265 aa).

In terms of domain architecture, Hcy-binding spans 19 to 338 (RDEINAILQK…DHIREIAEAV (320 aa)). Zn(2+) is bound by residues Cys-260, Cys-323, and Cys-324. Positions 371–632 (FVNIGERCNV…IHKELLQLCE (262 aa)) constitute a Pterin-binding domain. (6S)-5,6,7,8-tetrahydrofolate contacts are provided by residues 382 to 384 (GSR), Asp-449, Asn-470, Asp-537, Asn-579, Arg-585, and Arg-591. The B12-binding N-terminal domain maps to 662–759 (QTDEWRNGPV…FMEKEREETR (98 aa)). Methylcob(III)alamin contacts are provided by residues Glu-709, 782-786 (GDVHD), His-785, Ser-830, Thr-834, and Ala-886. In terms of domain architecture, B12-binding spans 772 to 907 (QGTIVLATVK…DENLKDEYFE (136 aa)). The region spanning 923–1265 (SLKERRYLPL…LGPILGYDTD (343 aa)) is the AdoMet activation domain. Residues Asp-974, Arg-1172, and 1227–1228 (YF) each bind S-adenosyl-L-methionine. The residue at position 1264 (Thr-1264) is a Phosphothreonine.

The protein belongs to the vitamin-B12 dependent methionine synthase family. As to quaternary structure, monomer. Dimer. Forms a multiprotein complex with MMACHC, MMADHC and MTRR. It depends on methylcob(III)alamin as a cofactor. Zn(2+) is required as a cofactor. In terms of tissue distribution, widely expressed. Expressed at the highest levels in pancreas, heart, brain, skeletal muscle and placenta. Expressed at lower levels in lung, liver and kidney.

It is found in the cytoplasm. It carries out the reaction (6S)-5-methyl-5,6,7,8-tetrahydrofolate + L-homocysteine = (6S)-5,6,7,8-tetrahydrofolate + L-methionine. Its pathway is amino-acid biosynthesis; L-methionine biosynthesis via de novo pathway; L-methionine from L-homocysteine (MetH route): step 1/1. In terms of biological role, catalyzes the transfer of a methyl group from methylcob(III)alamin (MeCbl) to homocysteine, yielding enzyme-bound cob(I)alamin and methionine in the cytosol. MeCbl is an active form of cobalamin (vitamin B12) used as a cofactor for methionine biosynthesis. Cob(I)alamin form is regenerated to MeCbl by a transfer of a methyl group from 5-methyltetrahydrofolate. The processing of cobalamin in the cytosol occurs in a multiprotein complex composed of at least MMACHC, MMADHC, MTRR (methionine synthase reductase) and MTR which may contribute to shuttle safely and efficiently cobalamin towards MTR in order to produce methionine. The chain is Methionine synthase from Homo sapiens (Human).